The chain runs to 751 residues: Ecdysteroid-phosphate phosphatase (751 aa).

Residues 16–60 (CISKQHLTPLQTLLQMGFPRHRAEKALASTGNRGVQIASDWLLAH) enclose the UBA domain. The SH3 domain occupies 271–336 (ATKQVQKVVY…PVNYTERTAE (66 aa)). 2 disordered regions span residues 367-394 (GRSISTEPDDRQNTAHPDIIEGSSFEES) and 458-484 (EPPAAQPPRPDDTLSVHSDHSLHPGSL). Residues 466-479 (RPDDTLSVHSDHSL) are compositionally biased toward basic and acidic residues. The interval 490-751 (KNRKIYIMRH…RFEWNALSAT (262 aa)) is phosphatase-like. Residue Arg-498 is part of the active site. The active-site Tele-phosphohistidine intermediate is the His-499. His-681 is a catalytic residue.

The protein resides in the cytoplasm. The protein localises to the cytosol. It is found in the nucleus. The enzyme catalyses ecdysone 22-phosphate + H2O = ecdysone + phosphate. The catalysed reaction is 20-hydroxyecdysone 22-phosphate + H2O = 20-hydroxyecdysone + phosphate. It carries out the reaction 2-deoxyecdysone 22-phosphate + H2O = 2-deoxyecdysone + phosphate. Functionally, steroid phosphatase that dephosphorylates ecdysteroids such as ecdysone 22-phosphate (E22P), 3-epi-ecdysone 22-phosphate (E22P) and 3-epi-ecdysone 2-phosphate (E2P). Likely catalyzes the conversion of inactive phosphorylated ecdysteroids into their active forms. Shows high activity towards ecdysone 22-phosphate (E22P), but is also significantly active against 3-epi-ecdysone 22-phosphate (E22P) and 3-epi-ecdysone 2-phosphate (E2P). Also displays acid phosphatase activity towards 4-nitrophenyl phosphate (pNNP) in vitro. Has no activity towards 3-epi-ecdysone 3-phosphate (E3P). The chain is Ecdysteroid-phosphate phosphatase from Drosophila melanogaster (Fruit fly).